A 273-amino-acid polypeptide reads, in one-letter code: MALKNFNPITPSLRELVQVDKTSLWKGRPLKSLTKGISKTGGRNNQGRITSWHRGGGHKKLYRIIDFKRNKIDVSAIVERIEYDPNRTAFIALIKYEDGEYSYILAPQKLSVGDRVISSQDADIKIGNCLPLKCIPIGTTLHNVEMKVGKGGQIARSAGTSVDLVGKDSGYAQIKLRSGEFRLVPLDCKATIGSISNPDQKNINLGKAGRNRWLGWRPHVRGVAMNPVDHPHGGGEGKTSGGRHPVTPWGFPTKGKKTRKNKRTSKFIVKKRK.

The segment at 228 to 273 (VDHPHGGGEGKTSGGRHPVTPWGFPTKGKKTRKNKRTSKFIVKKRK) is disordered. Over residues 254–273 (KGKKTRKNKRTSKFIVKKRK) the composition is skewed to basic residues.

Belongs to the universal ribosomal protein uL2 family. As to quaternary structure, part of the 50S ribosomal subunit. Forms a bridge to the 30S subunit in the 70S ribosome.

Its function is as follows. One of the primary rRNA binding proteins. Required for association of the 30S and 50S subunits to form the 70S ribosome, for tRNA binding and peptide bond formation. It has been suggested to have peptidyltransferase activity; this is somewhat controversial. Makes several contacts with the 16S rRNA in the 70S ribosome. This Rickettsia rickettsii (strain Iowa) protein is Large ribosomal subunit protein uL2.